The sequence spans 314 residues: tRNA pseudouridine synthase B (314 aa).

Asp41 (nucleophile) is an active-site residue.

This sequence belongs to the pseudouridine synthase TruB family. Type 1 subfamily.

It carries out the reaction uridine(55) in tRNA = pseudouridine(55) in tRNA. Its function is as follows. Responsible for synthesis of pseudouridine from uracil-55 in the psi GC loop of transfer RNAs. This is tRNA pseudouridine synthase B from Prochlorococcus marinus (strain NATL2A).